We begin with the raw amino-acid sequence, 455 residues long: Elongation factor Tu, mitochondrial (455 aa).

A mitochondrion-targeting transit peptide spans 1-46 (MTTMAAATLLRATPHFSGLAAGRTFLLQGLLRLLKAPALPLLCRGL). Positions 58 to 254 (KPHVNVGTIG…AVDTYIPVPA (197 aa)) constitute a tr-type G domain. Residues 67-74 (GHVDHGKT) form a G1 region. 5 residues coordinate GTP: Asp-70, Gly-72, Lys-73, Thr-74, and Thr-75. Mg(2+) is bound at residue Thr-74. Lys-82 is modified (N6-acetyllysine). Lys-91 bears the N6-acetyllysine; alternate mark. At Lys-91 the chain carries N6-succinyllysine; alternate. Positions 108–112 (GITIN) are G2. Positions 129 to 132 (DCPG) are G3. Residues Asn-184, Asp-187, Ser-222, Ala-223, and Leu-224 each coordinate GTP. A G4 region spans residues 184-187 (NKAD). Residues 222–224 (SAL) are G5. At Lys-237 the chain carries N6-succinyllysine. At Lys-259 the chain carries N6-acetyllysine. A Phosphothreonine modification is found at Thr-281. An N6-succinyllysine modification is found at Lys-289. Ser-315 carries the post-translational modification Phosphoserine. An N6-acetyllysine mark is found at Lys-364 and Lys-421.

Belongs to the TRAFAC class translation factor GTPase superfamily. Classic translation factor GTPase family. EF-Tu/EF-1A subfamily. As to quaternary structure, interacts with NLRX1. Interacts with ATG16L1. In terms of assembly, (Microbial infection) Interacts with human parainfluenza virus 3 matrix protein; this interaction inhibits RLR-mediated type I interferon production while promoting autophagy. (Microbial infection) Interacts with Hantaan hantavirus glycoprotein N; this interaction contributes to the virus-induced degradation of mitochondria by autophagy, which leads to degradation of MAVS and inhibition of type I interferon (IFN) responses.

The protein resides in the mitochondrion. It carries out the reaction GTP + H2O = GDP + phosphate + H(+). Functionally, GTP hydrolase that promotes the GTP-dependent binding of aminoacyl-tRNA to the A-site of ribosomes during protein biosynthesis. Also plays a role in the regulation of autophagy and innate immunity. Recruits ATG5-ATG12 and NLRX1 at mitochondria and serves as a checkpoint of the RIGI-MAVS pathway. In turn, inhibits RLR-mediated type I interferon while promoting autophagy. The chain is Elongation factor Tu, mitochondrial (TUFM) from Homo sapiens (Human).